The chain runs to 339 residues: Heat-inducible transcription repressor HrcA (339 aa).

Belongs to the HrcA family.

Negative regulator of class I heat shock genes (grpE-dnaK-dnaJ and groELS operons). Prevents heat-shock induction of these operons. This chain is Heat-inducible transcription repressor HrcA, found in Thiobacillus denitrificans (strain ATCC 25259 / T1).